An 805-amino-acid chain; its full sequence is Ribosome biogenesis protein ERB1 (805 aa).

Residues 1 to 105 (MVKGRKSQKA…SDFSEDDTKS (105 aa)) form a disordered region. The segment covering 8–22 (QKADKVTKAKKRVAD) has biased composition (basic and acidic residues). Positions 23-75 (EVDESESEPELQVEGLIDAEAESEDDESFESAEENASAEEDEEDEEDEEDSDA) are enriched in acidic residues. Residues 264 to 382 (RFVPSKNEAK…LRKVPGYTES (119 aa)) form a required for interaction with NOP7 region. A required for interaction with YTM1 region spans residues 382–418 (SVRERFERSLDLYLAPRMRKNKLNIDPESLIPELPSP). WD repeat units follow at residues 434-473 (GHEG…EVYR), 482-522 (NPED…YDIE), 590-632 (VCKK…TQSP), 635-673 (KSKG…LVKK), 676-715 (PGAR…TPYK), 719-758 (YHDK…DMMK), and 775-805 (GHLG…MWTT).

This sequence belongs to the WD repeat BOP1/ERB1 family. As to quaternary structure, component of the NOP7 complex, composed of ERB1, NOP7 and YTM1. The complex is held together by ERB1, which interacts with NOP7 via its N-terminal domain and with YTM1 via a high-affinity interaction between the seven-bladed beta-propeller domains of the 2 proteins. The NOP7 complex associates with the 66S pre-ribosome.

The protein resides in the nucleus. It localises to the nucleolus. It is found in the nucleoplasm. Component of the NOP7 complex, which is required for maturation of the 25S and 5.8S ribosomal RNAs and formation of the 60S ribosome. This is Ribosome biogenesis protein ERB1 from Candida glabrata (strain ATCC 2001 / BCRC 20586 / JCM 3761 / NBRC 0622 / NRRL Y-65 / CBS 138) (Yeast).